The following is a 269-amino-acid chain: Hydroxyethylthiazole kinase (269 aa).

A substrate-binding site is contributed by Met46. ATP contacts are provided by Arg122 and Thr168. Position 195 (Gly195) interacts with substrate.

This sequence belongs to the Thz kinase family. Requires Mg(2+) as cofactor.

The catalysed reaction is 5-(2-hydroxyethyl)-4-methylthiazole + ATP = 4-methyl-5-(2-phosphooxyethyl)-thiazole + ADP + H(+). Its pathway is cofactor biosynthesis; thiamine diphosphate biosynthesis; 4-methyl-5-(2-phosphoethyl)-thiazole from 5-(2-hydroxyethyl)-4-methylthiazole: step 1/1. Its function is as follows. Catalyzes the phosphorylation of the hydroxyl group of 4-methyl-5-beta-hydroxyethylthiazole (THZ). The protein is Hydroxyethylthiazole kinase of Geobacillus thermodenitrificans (strain NG80-2).